The primary structure comprises 391 residues: Stearoyl-[acyl-carrier-protein] 9-desaturase 6, chloroplastic (391 aa).

Residues 1 to 38 (MLAHKSLLSFTTQWATLMPSPSTFLASRPRGPAKISAV) constitute a chloroplast transit peptide. Fe cation is bound by residues Glu-130, Glu-168, His-171, Glu-221, Glu-254, and His-257.

This sequence belongs to the fatty acid desaturase type 2 family. In terms of assembly, homodimer. Requires Fe(2+) as cofactor.

It localises to the plastid. Its subcellular location is the chloroplast. The catalysed reaction is octadecanoyl-[ACP] + 2 reduced [2Fe-2S]-[ferredoxin] + O2 + 2 H(+) = (9Z)-octadecenoyl-[ACP] + 2 oxidized [2Fe-2S]-[ferredoxin] + 2 H2O. Its pathway is lipid metabolism; fatty acid metabolism. Its function is as follows. Converts stearoyl-ACP to oleoyl-ACP by introduction of a cis double bond between carbons 9 and 10 of the acyl chain. This Arabidopsis thaliana (Mouse-ear cress) protein is Stearoyl-[acyl-carrier-protein] 9-desaturase 6, chloroplastic (S-ACP-DES6).